Reading from the N-terminus, the 360-residue chain is F420-dependent hydroxymycolic acid dehydrogenase (360 aa).

Residues 1–40 constitute a signal peptide (tat-type signal); that stretch reads MTGISRRTFGLAAGFGAIGAGGLGGGCSTRSGPTPTPEPA. Aspartate 77 serves as a coordination point for coenzyme F420-(gamma-Glu)n. The Proton donor role is filled by histidine 78. 145 to 146 serves as a coordination point for coenzyme F420-(gamma-Glu)n; sequence TG. Catalysis depends on glutamate 147, which acts as the Proton acceptor. Coenzyme F420-(gamma-Glu)n contacts are provided by residues asparagine 150 and 213-214; that span reads SG.

It belongs to the F420-dependent hydroxymycolic acid dehydrogenase family. In terms of assembly, homodimer. Post-translationally, is exported by the Tat system. The position of the signal peptide cleavage has not been experimentally proven. In terms of processing, may be lipidated.

It is found in the cell envelope. The protein operates within lipid metabolism; mycolic acid biosynthesis. Is inhibited by the anti-tuberculous drug PA-824, a bicyclic 4-nitroimidazole class compound. Therefore, this is consistent with the finding that PA-824 inhibits the formation of K-MAs and causes an accumulation of hydroxymycolic acids (H-MAs) in M.tuberculosis. Functionally, catalyzes the coenzyme F420-dependent oxidation of hydroxymycolic acids (H-MAs) to ketomycolic acids (K-MAs), a lipid class making up the mycobacterial pseudo-outer membrane and over one-third of the dry weight of M.tuberculosis. Does not exhibit F420-dependent glucose-6-phosphate dehydrogenase (FGD) activity. The protein is F420-dependent hydroxymycolic acid dehydrogenase of Mycobacterium tuberculosis (strain ATCC 25618 / H37Rv).